The following is a 326-amino-acid chain: UDP-3-O-acylglucosamine N-acyltransferase (326 aa).

The Proton acceptor role is filled by H225.

Belongs to the transferase hexapeptide repeat family. LpxD subfamily. In terms of assembly, homotrimer.

It catalyses the reaction a UDP-3-O-[(3R)-3-hydroxyacyl]-alpha-D-glucosamine + a (3R)-hydroxyacyl-[ACP] = a UDP-2-N,3-O-bis[(3R)-3-hydroxyacyl]-alpha-D-glucosamine + holo-[ACP] + H(+). It participates in bacterial outer membrane biogenesis; LPS lipid A biosynthesis. Its function is as follows. Catalyzes the N-acylation of UDP-3-O-acylglucosamine using 3-hydroxyacyl-ACP as the acyl donor. Is involved in the biosynthesis of lipid A, a phosphorylated glycolipid that anchors the lipopolysaccharide to the outer membrane of the cell. The chain is UDP-3-O-acylglucosamine N-acyltransferase from Acidovorax ebreus (strain TPSY) (Diaphorobacter sp. (strain TPSY)).